The sequence spans 218 residues: GTP cyclohydrolase 1 (218 aa).

Zn(2+) is bound by residues C109, H112, and C180.

The protein belongs to the GTP cyclohydrolase I family. Toroid-shaped homodecamer, composed of two pentamers of five dimers.

It carries out the reaction GTP + H2O = 7,8-dihydroneopterin 3'-triphosphate + formate + H(+). Its pathway is cofactor biosynthesis; 7,8-dihydroneopterin triphosphate biosynthesis; 7,8-dihydroneopterin triphosphate from GTP: step 1/1. This Haemophilus influenzae (strain ATCC 51907 / DSM 11121 / KW20 / Rd) protein is GTP cyclohydrolase 1 (folE).